A 184-amino-acid polypeptide reads, in one-letter code: Probable DNA-directed RNA polymerase subunit delta (184 aa).

An HTH HARE-type domain is found at Lys14–Trp82. The interval Leu114 to Ile184 is disordered. Acidic residues predominate over residues Glu117–Ile184.

The protein belongs to the RpoE family. RNAP is composed of a core of 2 alpha, a beta and a beta' subunits. The core is associated with a delta subunit and one of several sigma factors.

Its function is as follows. Participates in both the initiation and recycling phases of transcription. In the presence of the delta subunit, RNAP displays an increased specificity of transcription, a decreased affinity for nucleic acids, and an increased efficiency of RNA synthesis because of enhanced recycling. The protein is Probable DNA-directed RNA polymerase subunit delta of Staphylococcus carnosus (strain TM300).